Reading from the N-terminus, the 178-residue chain is CDP-archaeol synthase (178 aa).

5 consecutive transmembrane segments (helical) span residues 3-23 (LLLL…ANAV), 56-76 (FFGI…VILY), 87-107 (LFGY…GDML), 123-145 (APIL…FYPL), and 150-169 (IVLL…IIAY).

It belongs to the CDP-archaeol synthase family. Requires Mg(2+) as cofactor.

It localises to the cell membrane. The catalysed reaction is 2,3-bis-O-(geranylgeranyl)-sn-glycerol 1-phosphate + CTP + H(+) = CDP-2,3-bis-O-(geranylgeranyl)-sn-glycerol + diphosphate. It participates in membrane lipid metabolism; glycerophospholipid metabolism. In terms of biological role, catalyzes the formation of CDP-2,3-bis-(O-geranylgeranyl)-sn-glycerol (CDP-archaeol) from 2,3-bis-(O-geranylgeranyl)-sn-glycerol 1-phosphate (DGGGP) and CTP. This reaction is the third ether-bond-formation step in the biosynthesis of archaeal membrane lipids. The sequence is that of CDP-archaeol synthase from Methanococcus maripaludis (strain C6 / ATCC BAA-1332).